The chain runs to 977 residues: Ephrin type-A receptor 1 (977 aa).

The N-terminal stretch at 1-26 is a signal peptide; that stretch reads MERRWPLGLALLLLLLCAPLPPGARA. Over 27–548 the chain is Extracellular; it reads EEVTLMDTST…PVSRSLTGGE (522 aa). Residues 28–210 form the Eph LBD domain; it reads EVTLMDTSTA…FYQRCAETVH (183 aa). Fibronectin type-III domains follow at residues 333 to 446 and 448 to 539; these read PPSA…MGHA and SLSG…TSPP. N-linked (GlcNAc...) asparagine glycosylation is found at asparagine 415 and asparagine 479. Residues 549–569 traverse the membrane as a helical segment; that stretch reads IVAVIFGLLLGIALLIGIYVF. Residues 570-977 lie on the Cytoplasmic side of the membrane; sequence RSRRGQRQRQ…ILCSIQGFKD (408 aa). Phosphotyrosine; by autocatalysis occurs at positions 600 and 606. The Protein kinase domain occupies 625–885; that stretch reads LIVDTVIGEG…QLQAHLEQLL (261 aa). ATP is bound by residues 631–639 and lysine 657; that span reads IGEGEFGEV. The Proton acceptor role is filled by aspartate 750. Residue tyrosine 782 is modified to Phosphotyrosine; by autocatalysis. Phosphoserine is present on residues serine 907 and serine 911. The region spanning 914-977 is the SAM domain; it reads IPYRSVSEWL…ILCSIQGFKD (64 aa). The PDZ-binding signature appears at 975–977; sequence FKD.

This sequence belongs to the protein kinase superfamily. Tyr protein kinase family. Ephrin receptor subfamily. As to quaternary structure, homodimer. Forms a signaling complex with LCK; PTK2B/PYK2 and PI3-kinase upon activation by EFNA1; regulates T-lymphocytes migration. Interacts (via SAM domain) with ILK (via ANK repeats); stimulated by EFNA1 but independent of the kinase activity of EPHA1. Interacts (kinase activity-dependent) with PTK2/FAK1. Phosphorylated. Autophosphorylation is stimulated by its ligand EFNA1. In terms of processing, ubiquitinated. As to expression, preferentially expressed in epithelial cells including skin, kidney, liver and thymus. Expressed in myogenic progenitor cells.

The protein resides in the cell membrane. It catalyses the reaction L-tyrosyl-[protein] + ATP = O-phospho-L-tyrosyl-[protein] + ADP + H(+). Receptor tyrosine kinase which binds promiscuously membrane-bound ephrin-A family ligands residing on adjacent cells, leading to contact-dependent bidirectional signaling into neighboring cells. The signaling pathway downstream of the receptor is referred to as forward signaling while the signaling pathway downstream of the ephrin ligand is referred to as reverse signaling. Binds with a low affinity EFNA3 and EFNA4 and with a high affinity to EFNA1 which most probably constitutes its cognate/functional ligand. Upon activation by EFNA1 induces cell attachment to the extracellular matrix inhibiting cell spreading and motility through regulation of ILK and downstream RHOA and RAC. Also plays a role in angiogenesis and regulates cell proliferation. May play a role in apoptosis. The protein is Ephrin type-A receptor 1 (Epha1) of Mus musculus (Mouse).